Reading from the N-terminus, the 1420-residue chain is DNA-directed RNA polymerase subunit beta' (1420 aa).

Residues Cys70, Cys72, Cys85, and Cys88 each contribute to the Zn(2+) site. Residues Asp464, Asp466, and Asp468 each contribute to the Mg(2+) site. Residues Cys823, Cys897, Cys904, and Cys907 each coordinate Zn(2+).

It belongs to the RNA polymerase beta' chain family. As to quaternary structure, the RNAP catalytic core consists of 2 alpha, 1 beta, 1 beta' and 1 omega subunit. When a sigma factor is associated with the core the holoenzyme is formed, which can initiate transcription. It depends on Mg(2+) as a cofactor. The cofactor is Zn(2+).

It catalyses the reaction RNA(n) + a ribonucleoside 5'-triphosphate = RNA(n+1) + diphosphate. In terms of biological role, DNA-dependent RNA polymerase catalyzes the transcription of DNA into RNA using the four ribonucleoside triphosphates as substrates. This Polynucleobacter asymbioticus (strain DSM 18221 / CIP 109841 / QLW-P1DMWA-1) (Polynucleobacter necessarius subsp. asymbioticus) protein is DNA-directed RNA polymerase subunit beta'.